A 136-amino-acid chain; its full sequence is Protein YebF (136 aa).

A signal peptide spans 1-23 (MKKTGLALVLATILLGMMGSVHA). The 88-residue stretch at 30-117 (KVPACIGLNQ…KSGTMTYTGL (88 aa)) folds into the YebF/Cmi domain. Cysteines 34 and 107 form a disulfide. The tract at residues 117-136 (LNAQTRPDPQIGLNSQAGPK) is disordered.

This sequence belongs to the YebF family.

It is found in the secreted. The protein is Protein YebF of Yersinia pseudotuberculosis serotype O:1b (strain IP 31758).